Here is a 367-residue protein sequence, read N- to C-terminus: Flagellin 2 (367 aa).

Belongs to the bacterial flagellin family.

The protein resides in the secreted. The protein localises to the bacterial flagellum. Its function is as follows. Flagellin is the subunit protein which polymerizes to form the filaments of bacterial flagella. This Proteus mirabilis protein is Flagellin 2 (fliC2).